Consider the following 163-residue polypeptide: GTP-dependent dephospho-CoA kinase (163 aa).

5 residues coordinate GTP: Asp-38, Val-39, Asp-57, Glu-115, and Asp-138.

The protein belongs to the GTP-dependent DPCK family.

The enzyme catalyses 3'-dephospho-CoA + GTP = GDP + CoA + H(+). The protein operates within cofactor biosynthesis; coenzyme A biosynthesis. In terms of biological role, catalyzes the GTP-dependent phosphorylation of the 3'-hydroxyl group of dephosphocoenzyme A to form coenzyme A (CoA). This chain is GTP-dependent dephospho-CoA kinase, found in Methanothermobacter thermautotrophicus (strain ATCC 29096 / DSM 1053 / JCM 10044 / NBRC 100330 / Delta H) (Methanobacterium thermoautotrophicum).